The primary structure comprises 292 residues: Light-independent protochlorophyllide reductase iron-sulfur ATP-binding protein (292 aa).

Residues 10–15 (GIGKST) and K39 each bind ATP. S14 is a Mg(2+) binding site. Position 95 (C95) interacts with [4Fe-4S] cluster. 182–183 (NR) contributes to the ATP binding site.

The protein belongs to the NifH/BchL/ChlL family. Homodimer. Protochlorophyllide reductase is composed of three subunits; ChlL, ChlN and ChlB. The cofactor is [4Fe-4S] cluster.

The protein resides in the plastid. It is found in the chloroplast. The catalysed reaction is chlorophyllide a + oxidized 2[4Fe-4S]-[ferredoxin] + 2 ADP + 2 phosphate = protochlorophyllide a + reduced 2[4Fe-4S]-[ferredoxin] + 2 ATP + 2 H2O. The protein operates within porphyrin-containing compound metabolism; chlorophyll biosynthesis (light-independent). Component of the dark-operative protochlorophyllide reductase (DPOR) that uses Mg-ATP and reduced ferredoxin to reduce ring D of protochlorophyllide (Pchlide) to form chlorophyllide a (Chlide). This reaction is light-independent. The L component serves as a unique electron donor to the NB-component of the complex, and binds Mg-ATP. The chain is Light-independent protochlorophyllide reductase iron-sulfur ATP-binding protein from Huperzia lucidula (Shining clubmoss).